The following is a 504-amino-acid chain: uncharacterized protein (504 aa).

Positions 1–212 are excised as a propeptide; the sequence is MFMKSKAAGS…LYKTQDPVLD (212 aa).

This is an uncharacterized protein from Deinococcus radiodurans (strain ATCC 13939 / DSM 20539 / JCM 16871 / CCUG 27074 / LMG 4051 / NBRC 15346 / NCIMB 9279 / VKM B-1422 / R1).